Here is a 141-residue protein sequence, read N- to C-terminus: Nuclear transcription factor Y subunit B-1 (141 aa).

The tract at residues 1-23 is disordered; the sequence is MADTPSSPAGDGGESGGSVREQD. A2 carries the N-acetylalanine modification. The DNA-binding element occupies 26–32; it reads LPIANIS. A subunit association domain (SAD) region spans residues 53–64; it reads VQECVSEFISFI. A disordered region spans residues 114-141; it reads DNKGSGKSGDGSNRDAGGGVSGEEMPSW.

It belongs to the NFYB/HAP3 subunit family. As to quaternary structure, heterotrimeric transcription factor composed of three components, NF-YA, NF-YB and NF-YC. NF-YB and NF-YC must interact and dimerize for NF-YA association and DNA binding. Binds directly with DPB3-1. As to expression, ubiquitous. Predominantly expressed in leaves, flowers and siliques.

The protein localises to the nucleus. Its function is as follows. Component of the NF-Y/HAP transcription factor complex. The NF-Y complex stimulates the transcription of various genes by recognizing and binding to a CCAAT motif in promoters. The polypeptide is Nuclear transcription factor Y subunit B-1 (Arabidopsis thaliana (Mouse-ear cress)).